Here is a 432-residue protein sequence, read N- to C-terminus: Enolase (432 aa).

Gln167 contributes to the (2R)-2-phosphoglycerate binding site. Glu209 serves as the catalytic Proton donor. Residues Asp246, Glu290, and Asp317 each coordinate Mg(2+). The (2R)-2-phosphoglycerate site is built by Lys342, Arg371, Ser372, and Lys393. The active-site Proton acceptor is the Lys342.

It belongs to the enolase family. As to quaternary structure, component of the RNA degradosome, a multiprotein complex involved in RNA processing and mRNA degradation. Requires Mg(2+) as cofactor.

It is found in the cytoplasm. Its subcellular location is the secreted. The protein resides in the cell surface. The enzyme catalyses (2R)-2-phosphoglycerate = phosphoenolpyruvate + H2O. Its pathway is carbohydrate degradation; glycolysis; pyruvate from D-glyceraldehyde 3-phosphate: step 4/5. In terms of biological role, catalyzes the reversible conversion of 2-phosphoglycerate (2-PG) into phosphoenolpyruvate (PEP). It is essential for the degradation of carbohydrates via glycolysis. The polypeptide is Enolase (Escherichia coli O139:H28 (strain E24377A / ETEC)).